The following is a 60-amino-acid chain: Large ribosomal subunit protein bL32 (60 aa).

The protein belongs to the bacterial ribosomal protein bL32 family.

This chain is Large ribosomal subunit protein bL32, found in Streptococcus sanguinis (strain SK36).